The sequence spans 323 residues: Methionyl-tRNA formyltransferase (323 aa).

115 to 118 (SLLP) provides a ligand contact to (6S)-5,6,7,8-tetrahydrofolate.

Belongs to the Fmt family.

It carries out the reaction L-methionyl-tRNA(fMet) + (6R)-10-formyltetrahydrofolate = N-formyl-L-methionyl-tRNA(fMet) + (6S)-5,6,7,8-tetrahydrofolate + H(+). Attaches a formyl group to the free amino group of methionyl-tRNA(fMet). The formyl group appears to play a dual role in the initiator identity of N-formylmethionyl-tRNA by promoting its recognition by IF2 and preventing the misappropriation of this tRNA by the elongation apparatus. The chain is Methionyl-tRNA formyltransferase from Lactococcus lactis subsp. cremoris (strain MG1363).